An 885-amino-acid chain; its full sequence is DNA mismatch repair protein MutS (885 aa).

Residue 626–633 coordinates ATP; the sequence is GPNMGGKS.

Belongs to the DNA mismatch repair MutS family.

This protein is involved in the repair of mismatches in DNA. It is possible that it carries out the mismatch recognition step. This protein has a weak ATPase activity. In Burkholderia ambifaria (strain MC40-6), this protein is DNA mismatch repair protein MutS.